The primary structure comprises 933 residues: Isoleucine--tRNA ligase (933 aa).

The short motif at proline 57–histidine 67 is the 'HIGH' region element. Glutamate 554 is an L-isoleucyl-5'-AMP binding site. The short motif at lysine 595–serine 599 is the 'KMSKS' region element. Lysine 598 is an ATP binding site.

The protein belongs to the class-I aminoacyl-tRNA synthetase family. IleS type 1 subfamily. Monomer.

The protein localises to the cytoplasm. It carries out the reaction tRNA(Ile) + L-isoleucine + ATP = L-isoleucyl-tRNA(Ile) + AMP + diphosphate. Its function is as follows. Catalyzes the attachment of isoleucine to tRNA(Ile). As IleRS can inadvertently accommodate and process structurally similar amino acids such as valine, to avoid such errors it has two additional distinct tRNA(Ile)-dependent editing activities. One activity is designated as 'pretransfer' editing and involves the hydrolysis of activated Val-AMP. The other activity is designated 'posttransfer' editing and involves deacylation of mischarged Val-tRNA(Ile). The protein is Isoleucine--tRNA ligase of Streptococcus pyogenes serotype M6 (strain ATCC BAA-946 / MGAS10394).